A 163-amino-acid polypeptide reads, in one-letter code: ATP synthase subunit b 1 (163 aa).

A helical transmembrane segment spans residues L5 to L25.

The protein belongs to the ATPase B chain family. F-type ATPases have 2 components, F(1) - the catalytic core - and F(0) - the membrane proton channel. F(1) has five subunits: alpha(3), beta(3), gamma(1), delta(1), epsilon(1). F(0) has three main subunits: a(1), b(2) and c(10-14). The alpha and beta chains form an alternating ring which encloses part of the gamma chain. F(1) is attached to F(0) by a central stalk formed by the gamma and epsilon chains, while a peripheral stalk is formed by the delta and b chains.

Its subcellular location is the cell inner membrane. F(1)F(0) ATP synthase produces ATP from ADP in the presence of a proton or sodium gradient. F-type ATPases consist of two structural domains, F(1) containing the extramembraneous catalytic core and F(0) containing the membrane proton channel, linked together by a central stalk and a peripheral stalk. During catalysis, ATP synthesis in the catalytic domain of F(1) is coupled via a rotary mechanism of the central stalk subunits to proton translocation. Its function is as follows. Component of the F(0) channel, it forms part of the peripheral stalk, linking F(1) to F(0). The polypeptide is ATP synthase subunit b 1 (Rhizobium etli (strain CIAT 652)).